The following is a 200-amino-acid chain: Dephospho-CoA kinase (200 aa).

The DPCK domain maps to 3-200 (IIGLTGGIGS…LWQRFATQVE (198 aa)). Residue 11-16 (GSGKST) participates in ATP binding.

Belongs to the CoaE family.

The protein localises to the cytoplasm. It carries out the reaction 3'-dephospho-CoA + ATP = ADP + CoA + H(+). The protein operates within cofactor biosynthesis; coenzyme A biosynthesis; CoA from (R)-pantothenate: step 5/5. Functionally, catalyzes the phosphorylation of the 3'-hydroxyl group of dephosphocoenzyme A to form coenzyme A. This chain is Dephospho-CoA kinase, found in Corynebacterium diphtheriae (strain ATCC 700971 / NCTC 13129 / Biotype gravis).